The primary structure comprises 254 residues: Protein orai-2 (254 aa).

Transmembrane regions (helical) follow at residues 66–83 (TSALLSGFAMVAMVEVQL), 94–114 (LIAFSACTTVLVAVHLFALLI), 148–168 (LAWGFSTVLGILLFLAEVVLL), and 196–216 (AALVSTIIMVPVGLIFVVFTI).

This sequence belongs to the Orai family. Oligomerizes in homomeric and heteromeric ORAI complexes. Native CRAC channels most likely consist of hexameric ORAI heteromers, implying that diverse ORAI1, ORAI2 and ORAI3 subunit combinations with distinct biophysical properties can operate in a cell-type specific way. Interacts with STIM1; this regulates channel activity. Interacts with CRACR2A/EFCAB4B.

It is found in the cell membrane. The catalysed reaction is Ca(2+)(in) = Ca(2+)(out). Its activity is regulated as follows. CRAC channels are regulated by fast Ca(2+)-dependent inactivation (FCDI), a mechanism that limits Ca(2+) influx and cell toxicity. ORAI2 channels display prominent FCDI. Inhibited by lanthanides such as Gd(3+) ions. Functionally, pore-forming subunit of inward rectifying Ca(2+) release-activated Ca(2+) (CRAC) channels. Assembles with ORAI1 and ORAI3 to form hexameric CRAC channels that mediate Ca(2+) influx upon depletion of endoplasmic reticulum Ca(2+) store and channel activation by Ca(2+) sensor STIM1, a process known as store-operated Ca(2+) entry (SOCE). Various pore subunit combinations may account for distinct CRAC channel spatiotemporal and cell-type specific dynamics. ORAI1 mainly contributes to the generation of Ca(2+) plateaus involved in sustained Ca(2+) entry and is dispensable for cytosolic Ca(2+) oscillations, whereas ORAI2 and ORAI3 generate oscillatory patterns. CRAC channels assemble in Ca(2+) signaling microdomains where Ca(2+) influx is coupled to calmodulin and calcineurin signaling and activation of NFAT transcription factors recruited to ORAI1 via AKAP5. CRAC channels are the main pathway for Ca(2+) influx in T cells and promote the immune response to pathogens by activating NFAT-dependent cytokine and chemokine transcription. This is Protein orai-2 (ORAI2) from Homo sapiens (Human).